We begin with the raw amino-acid sequence, 524 residues long: 2-isopropylmalate synthase (524 aa).

Residues 5-267 (VIIFDTTLRD…HTNIRHSEIH (263 aa)) form the Pyruvate carboxyltransferase domain. 4 residues coordinate Mn(2+): aspartate 14, histidine 202, histidine 204, and asparagine 238. A regulatory domain region spans residues 392-524 (KLEYLGVQSG…KTDKINTESV (133 aa)).

The protein belongs to the alpha-IPM synthase/homocitrate synthase family. LeuA type 1 subfamily. In terms of assembly, homodimer. It depends on Mn(2+) as a cofactor.

The protein resides in the cytoplasm. It catalyses the reaction 3-methyl-2-oxobutanoate + acetyl-CoA + H2O = (2S)-2-isopropylmalate + CoA + H(+). It functions in the pathway amino-acid biosynthesis; L-leucine biosynthesis; L-leucine from 3-methyl-2-oxobutanoate: step 1/4. Functionally, catalyzes the condensation of the acetyl group of acetyl-CoA with 3-methyl-2-oxobutanoate (2-ketoisovalerate) to form 3-carboxy-3-hydroxy-4-methylpentanoate (2-isopropylmalate). This chain is 2-isopropylmalate synthase, found in Aeromonas salmonicida (strain A449).